Here is a 124-residue protein sequence, read N- to C-terminus: Fluoride-specific ion channel FluC (124 aa).

The next 4 membrane-spanning stretches (helical) occupy residues 3–23 (YLLV…INTV), 36–56 (TFFI…YFAF), 66–86 (LFLM…SLDA), and 100–120 (LYVL…LALI). Residues Gly-74 and Thr-77 each contribute to the Na(+) site.

The protein belongs to the fluoride channel Fluc/FEX (TC 1.A.43) family.

It is found in the cell inner membrane. The enzyme catalyses fluoride(in) = fluoride(out). Its activity is regulated as follows. Na(+) is not transported, but it plays an essential structural role and its presence is essential for fluoride channel function. Fluoride-specific ion channel. Important for reducing fluoride concentration in the cell, thus reducing its toxicity. The polypeptide is Fluoride-specific ion channel FluC (Rhodopseudomonas palustris (strain BisB5)).